The primary structure comprises 256 residues: Nuclear shuttle protein (256 aa).

Positions 21–42 (YQGFRRTAIVTRHDGKRRQHQS) match the Bipartite nuclear localization signal motif. The short motif at 81-96 (QLGKIEPNRCRSYIKL) is the Nuclear localization signal element. The interval 150 to 187 (ELFGARINSHGNLAVMPSLKDRFYIRHLLKRVLSVDKD) is interaction with Arabidopsis thaliana NSI protein.

The protein belongs to the begomovirus nuclear shuttle protein family. As to quaternary structure, binds to single-stranded and double-stranded viral DNA. Interacts with the host nuclear shuttle interacting (NSI) protein. This interaction may allow NSP to recruit NSI monomers to the viral genome and thus regulate nuclear export of viral genome by NSP.

The protein localises to the host nucleus. Its subcellular location is the host cytoplasm. It localises to the host cell membrane. Binds to the genomic viral ssDNA, shuttles it into and out of the cell nucleus. Begomoviruses use 2 proteins to transport their DNA from cell to cell. The nuclear shuttle protein (NSP) shuttles it between nucleus and cytoplasm and the movement protein (MP) probably transports the DNA-NSP complex to the cell periphery and facilitates movement across the cell wall. The protein is Nuclear shuttle protein of Macroptilium lathyroides (Lima bean).